Consider the following 266-residue polypeptide: 5'-nucleotidase SurE (266 aa).

A divalent metal cation-binding residues include aspartate 8, aspartate 9, serine 39, and asparagine 95.

This sequence belongs to the SurE nucleotidase family. A divalent metal cation serves as cofactor.

Its subcellular location is the cytoplasm. The enzyme catalyses a ribonucleoside 5'-phosphate + H2O = a ribonucleoside + phosphate. In terms of biological role, nucleotidase that shows phosphatase activity on nucleoside 5'-monophosphates. The chain is 5'-nucleotidase SurE from Syntrophus aciditrophicus (strain SB).